The following is a 194-amino-acid chain: dTTP/UTP pyrophosphatase (194 aa).

Residue Asp-73 is the Proton acceptor of the active site.

It belongs to the Maf family. YhdE subfamily. It depends on a divalent metal cation as a cofactor.

The protein resides in the cytoplasm. The enzyme catalyses dTTP + H2O = dTMP + diphosphate + H(+). The catalysed reaction is UTP + H2O = UMP + diphosphate + H(+). Nucleoside triphosphate pyrophosphatase that hydrolyzes dTTP and UTP. May have a dual role in cell division arrest and in preventing the incorporation of modified nucleotides into cellular nucleic acids. This chain is dTTP/UTP pyrophosphatase, found in Clostridium botulinum (strain Loch Maree / Type A3).